The chain runs to 705 residues: Glycine--tRNA ligase beta subunit (705 aa).

It belongs to the class-II aminoacyl-tRNA synthetase family. Tetramer of two alpha and two beta subunits.

It localises to the cytoplasm. It catalyses the reaction tRNA(Gly) + glycine + ATP = glycyl-tRNA(Gly) + AMP + diphosphate. This chain is Glycine--tRNA ligase beta subunit, found in Persephonella marina (strain DSM 14350 / EX-H1).